The primary structure comprises 279 residues: Thymidylate synthase (279 aa).

Position 132 to 133 (132 to 133) interacts with dUMP; sequence RR. Residue C153 is the Nucleophile of the active site. DUMP-binding positions include 178–181, N189, and 219–221; these read RSND and HIY. D181 lines the (6R)-5,10-methylene-5,6,7,8-tetrahydrofolate pocket. Position 278 (A278) interacts with (6R)-5,10-methylene-5,6,7,8-tetrahydrofolate.

The protein belongs to the thymidylate synthase family. Bacterial-type ThyA subfamily. As to quaternary structure, homodimer.

The protein localises to the cytoplasm. It catalyses the reaction dUMP + (6R)-5,10-methylene-5,6,7,8-tetrahydrofolate = 7,8-dihydrofolate + dTMP. The protein operates within pyrimidine metabolism; dTTP biosynthesis. Functionally, catalyzes the reductive methylation of 2'-deoxyuridine-5'-monophosphate (dUMP) to 2'-deoxythymidine-5'-monophosphate (dTMP) while utilizing 5,10-methylenetetrahydrofolate (mTHF) as the methyl donor and reductant in the reaction, yielding dihydrofolate (DHF) as a by-product. This enzymatic reaction provides an intracellular de novo source of dTMP, an essential precursor for DNA biosynthesis. The protein is Thymidylate synthase of Lactococcus lactis subsp. cremoris (strain SK11).